The following is a 225-amino-acid chain: UPF0758 protein BP1235 (225 aa).

In terms of domain architecture, MPN spans 103-225; sequence ALANPDLVRR…TVSMAAQGHL (123 aa). Zn(2+) contacts are provided by histidine 174, histidine 176, and aspartate 187. A JAMM motif motif is present at residues 174 to 187; the sequence is HNHPGGTAAASAAD.

This sequence belongs to the UPF0758 family.

The chain is UPF0758 protein BP1235 from Bordetella pertussis (strain Tohama I / ATCC BAA-589 / NCTC 13251).